Consider the following 819-residue polypeptide: Leucine--tRNA ligase (819 aa).

The 'HIGH' region motif lies at 36–46 (PYPSGKIHMGH). Residues 586–590 (KMSKS) carry the 'KMSKS' region motif. Position 589 (Lys-589) interacts with ATP.

The protein belongs to the class-I aminoacyl-tRNA synthetase family.

Its subcellular location is the cytoplasm. It catalyses the reaction tRNA(Leu) + L-leucine + ATP = L-leucyl-tRNA(Leu) + AMP + diphosphate. The polypeptide is Leucine--tRNA ligase (Wolbachia pipientis subsp. Culex pipiens (strain wPip)).